The primary structure comprises 965 residues: Aminopeptidase N (965 aa).

Topologically, residues 2–8 are cytoplasmic; that stretch reads AKGFYIS. A helical; Signal-anchor for type II membrane protein transmembrane segment spans residues 9–32; it reads KTLGILGILLGVAAVCTIIALSVV. A cytosolic Ser/Thr-rich junction region spans residues 33 to 68; that stretch reads YAQEKNRNAENSAIAPTLPGSTSATTSTTNPAIDES. Residues 33 to 965 lie on the Extracellular side of the membrane; the sequence is YAQEKNRNAE…VVLKWFTENS (933 aa). The tract at residues 44–68 is disordered; the sequence is SAIAPTLPGSTSATTSTTNPAIDES. The span at 47 to 64 shows a compositional bias: low complexity; it reads APTLPGSTSATTSTTNPA. Positions 69–965 are metalloprotease; sequence KPWNQYRLPK…VVLKWFTENS (897 aa). Asn114 and Asn128 each carry an N-linked (GlcNAc...) asparagine glycan. Tyr176 carries the sulfotyrosine modification. Residues Asn234, Asn242, and Asn264 are each glycosylated (N-linked (GlcNAc...) asparagine). Substrate is bound at residue 351–355; it reads GAMEN. Residue His387 participates in Zn(2+) binding. Glu388 (proton acceptor) is an active-site residue. Zn(2+) is bound by residues His391 and Glu410. Residues Asn555, Asn606, and Asn624 are each glycosylated (N-linked (GlcNAc...) asparagine). Cys760 and Cys767 form a disulfide bridge. N-linked (GlcNAc...) asparagine glycosylation is present at Asn780. Cys797 and Cys833 form a disulfide bridge. Tyr852 is subject to Phosphotyrosine.

This sequence belongs to the peptidase M1 family. As to quaternary structure, homodimer. Interacts with SLC6A19. Zn(2+) serves as cofactor. Sulfated. In terms of processing, N- and O-glycosylated. Post-translationally, may undergo proteolysis and give rise to a soluble form. In terms of tissue distribution, widely distributed throughout the CNS. Particularly abundant in kidney and intestinal microvilli, also detected in lung and liver. Weakly expressed in heart and aorta.

Its subcellular location is the cell membrane. It catalyses the reaction Release of an N-terminal amino acid, Xaa-|-Yaa- from a peptide, amide or arylamide. Xaa is preferably Ala, but may be most amino acids including Pro (slow action). When a terminal hydrophobic residue is followed by a prolyl residue, the two may be released as an intact Xaa-Pro dipeptide.. Its function is as follows. Broad specificity aminopeptidase which plays a role in the final digestion of peptides generated from hydrolysis of proteins by gastric and pancreatic proteases. Also involved in the processing of various peptides including peptide hormones, such as angiotensin III and IV, neuropeptides, and chemokines. May also be involved the cleavage of peptides bound to major histocompatibility complex class II molecules of antigen presenting cells. May have a role in angiogenesis and promote cholesterol crystallization. May have a role in amino acid transport by acting as binding partner of amino acid transporter SLC6A19 and regulating its activity. This chain is Aminopeptidase N (Anpep), found in Rattus norvegicus (Rat).